Consider the following 491-residue polypeptide: ATP synthase subunit beta, chloroplastic (491 aa).

172 to 179 (GGAGVGKT) provides a ligand contact to ATP.

This sequence belongs to the ATPase alpha/beta chains family. As to quaternary structure, F-type ATPases have 2 components, CF(1) - the catalytic core - and CF(0) - the membrane proton channel. CF(1) has five subunits: alpha(3), beta(3), gamma(1), delta(1), epsilon(1). CF(0) has four main subunits: a(1), b(1), b'(1) and c(9-12).

Its subcellular location is the plastid. The protein localises to the chloroplast thylakoid membrane. It catalyses the reaction ATP + H2O + 4 H(+)(in) = ADP + phosphate + 5 H(+)(out). Produces ATP from ADP in the presence of a proton gradient across the membrane. The catalytic sites are hosted primarily by the beta subunits. The sequence is that of ATP synthase subunit beta, chloroplastic from Pisum sativum (Garden pea).